The sequence spans 171 residues: Small ribosomal subunit protein uS5 (171 aa).

The S5 DRBM domain occupies 16–79 (LIEKIVFINR…ERARKDMALV (64 aa)).

It belongs to the universal ribosomal protein uS5 family. Part of the 30S ribosomal subunit. Contacts proteins S4 and S8.

Its function is as follows. With S4 and S12 plays an important role in translational accuracy. Functionally, located at the back of the 30S subunit body where it stabilizes the conformation of the head with respect to the body. The protein is Small ribosomal subunit protein uS5 of Desulfotalea psychrophila (strain LSv54 / DSM 12343).